We begin with the raw amino-acid sequence, 438 residues long: Serine hydroxymethyltransferase (438 aa).

Residues leucine 133 and 137–139 (GHL) contribute to the (6S)-5,6,7,8-tetrahydrofolate site. Lysine 242 is modified (N6-(pyridoxal phosphate)lysine).

Belongs to the SHMT family. In terms of assembly, homodimer. Requires pyridoxal 5'-phosphate as cofactor.

It localises to the cytoplasm. The enzyme catalyses (6R)-5,10-methylene-5,6,7,8-tetrahydrofolate + glycine + H2O = (6S)-5,6,7,8-tetrahydrofolate + L-serine. It participates in one-carbon metabolism; tetrahydrofolate interconversion. Its pathway is amino-acid biosynthesis; glycine biosynthesis; glycine from L-serine: step 1/1. Catalyzes the reversible interconversion of serine and glycine with tetrahydrofolate (THF) serving as the one-carbon carrier. This reaction serves as the major source of one-carbon groups required for the biosynthesis of purines, thymidylate, methionine, and other important biomolecules. Also exhibits THF-independent aldolase activity toward beta-hydroxyamino acids, producing glycine and aldehydes, via a retro-aldol mechanism. This Brucella suis (strain ATCC 23445 / NCTC 10510) protein is Serine hydroxymethyltransferase.